We begin with the raw amino-acid sequence, 141 residues long: Zinc finger protein 593 homolog (141 aa).

Residues 1 to 32 form a disordered region; it reads MGRYSGHGGTHTKKKQYKRARSTKNRAKDIDQ. Positions 10-25 are enriched in basic residues; it reads THTKKKQYKRARSTKN. A C2H2-type zinc finger spans residues 60–84; that stretch reads NYCIHCSKHFVTNEDLQSHIKGKPH.

It belongs to the ZNF593/BUD20 C2H2-type zinc-finger protein family. In terms of assembly, associates with pre-60S ribosomal particles; released from the pre-60S particle very early in the cytoplasm.

It localises to the nucleus. The protein resides in the cytoplasm. Involved in pre-60S ribosomal particles maturation by promoting the nuclear export of the 60S ribosome. The protein is Zinc finger protein 593 homolog of Dictyostelium discoideum (Social amoeba).